The sequence spans 232 residues: Protein DOG1-like 4 (232 aa).

The DOG1 domain occupies 9-229 (EEKFLEFYES…RRWGNRRHYV (221 aa)).

This Arabidopsis thaliana (Mouse-ear cress) protein is Protein DOG1-like 4.